The primary structure comprises 325 residues: 7,8-didemethyl-8-hydroxy-5-deazariboflavin synthase (325 aa).

A Radical SAM core domain is found at Met-1–Asn-241. Cys-15, Cys-19, and Cys-22 together coordinate [4Fe-4S] cluster.

It belongs to the radical SAM superfamily. CofG family. In terms of assembly, consists of two subunits, CofG and CofH. Requires [4Fe-4S] cluster as cofactor.

The catalysed reaction is 5-amino-5-(4-hydroxybenzyl)-6-(D-ribitylimino)-5,6-dihydrouracil + S-adenosyl-L-methionine = 7,8-didemethyl-8-hydroxy-5-deazariboflavin + 5'-deoxyadenosine + L-methionine + NH4(+) + H(+). It participates in cofactor biosynthesis; coenzyme F0 biosynthesis. Functionally, catalyzes the radical-mediated synthesis of 7,8-didemethyl-8-hydroxy-5-deazariboflavin from 5-amino-5-(4-hydroxybenzyl)-6-(D-ribitylimino)-5,6-dihydrouracil. The chain is 7,8-didemethyl-8-hydroxy-5-deazariboflavin synthase from Methanosarcina barkeri (strain Fusaro / DSM 804).